We begin with the raw amino-acid sequence, 337 residues long: Heat-inducible transcription repressor HrcA (337 aa).

It belongs to the HrcA family.

Negative regulator of class I heat shock genes (grpE-dnaK-dnaJ and groELS operons). Prevents heat-shock induction of these operons. This chain is Heat-inducible transcription repressor HrcA, found in Kocuria rhizophila (strain ATCC 9341 / DSM 348 / NBRC 103217 / DC2201).